The primary structure comprises 505 residues: Deoxyguanosinetriphosphate triphosphohydrolase (505 aa).

In terms of domain architecture, HD spans 66–273; it reads RLTHSMEVQQ…MEAADDISYC (208 aa).

It belongs to the dGTPase family. Type 1 subfamily. As to quaternary structure, homotetramer. The cofactor is Mg(2+).

It carries out the reaction dGTP + H2O = 2'-deoxyguanosine + triphosphate + H(+). DGTPase preferentially hydrolyzes dGTP over the other canonical NTPs. The chain is Deoxyguanosinetriphosphate triphosphohydrolase from Escherichia coli O17:K52:H18 (strain UMN026 / ExPEC).